Reading from the N-terminus, the 376-residue chain is Putative glutamate--cysteine ligase 2-1 (376 aa).

It belongs to the glutamate--cysteine ligase type 2 family. YbdK subfamily.

It catalyses the reaction L-cysteine + L-glutamate + ATP = gamma-L-glutamyl-L-cysteine + ADP + phosphate + H(+). Functionally, ATP-dependent carboxylate-amine ligase which exhibits weak glutamate--cysteine ligase activity. This is Putative glutamate--cysteine ligase 2-1 from Mycolicibacterium smegmatis (strain ATCC 700084 / mc(2)155) (Mycobacterium smegmatis).